The following is a 157-amino-acid chain: Small ribosomal subunit protein uS7 (157 aa).

The protein belongs to the universal ribosomal protein uS7 family. Part of the 30S ribosomal subunit. Contacts proteins S9 and S11.

Its function is as follows. One of the primary rRNA binding proteins, it binds directly to 16S rRNA where it nucleates assembly of the head domain of the 30S subunit. Is located at the subunit interface close to the decoding center, probably blocks exit of the E-site tRNA. The sequence is that of Small ribosomal subunit protein uS7 from Caldicellulosiruptor saccharolyticus (strain ATCC 43494 / DSM 8903 / Tp8T 6331).